The chain runs to 147 residues: NADH-quinone oxidoreductase subunit A (147 aa).

Transmembrane regions (helical) follow at residues 11–31 (IWPL…VMAL), 68–88 (LIAV…AWAV), and 93–113 (LGWP…AALA).

It belongs to the complex I subunit 3 family. In terms of assembly, NDH-1 is composed of 14 different subunits. Subunits NuoA, H, J, K, L, M, N constitute the membrane sector of the complex.

The protein localises to the cell inner membrane. The catalysed reaction is a quinone + NADH + 5 H(+)(in) = a quinol + NAD(+) + 4 H(+)(out). In terms of biological role, NDH-1 shuttles electrons from NADH, via FMN and iron-sulfur (Fe-S) centers, to quinones in the respiratory chain. The immediate electron acceptor for the enzyme in this species is believed to be ubiquinone. Couples the redox reaction to proton translocation (for every two electrons transferred, four hydrogen ions are translocated across the cytoplasmic membrane), and thus conserves the redox energy in a proton gradient. The chain is NADH-quinone oxidoreductase subunit A from Nitrosospira multiformis (strain ATCC 25196 / NCIMB 11849 / C 71).